We begin with the raw amino-acid sequence, 955 residues long: HAUS augmin-like complex subunit 6 (955 aa).

Positions 188–219 form a coiled coil; that stretch reads QKYQENAQLSVKQVRNLRSECIGLENQIKKME. At Ser406 the chain carries Phosphoserine. Residues 474–495 form a disordered region; sequence NSVTVLEKDTKMGTPKEKNEAI. Positions 479–495 are enriched in basic and acidic residues; the sequence is LEKDTKMGTPKEKNEAI. Ser507, Ser524, Ser530, Ser550, and Ser552 each carry phosphoserine. A Phosphothreonine modification is found at Thr584. 4 positions are modified to phosphoserine: Ser715, Ser728, Ser742, and Ser805. The segment at 789–814 is disordered; the sequence is FNSSSSSEANFKLEPNSPMHGGTLLE. Thr823 bears the Phosphothreonine mark. Residues 848–876 are disordered; sequence REESYLSNSQTPERHKPELSPTPQNVQTD. 3 positions are modified to phosphoserine: Ser908, Ser914, and Ser943.

This sequence belongs to the HAUS6 family. As to quaternary structure, component of the HAUS augmin-like complex. The complex interacts with the gamma-tubulin ring complex and this interaction is required for spindle assembly. Interacts with PLK1, NEDD1 and gamma-tubulin. Interacts with EML3 (phosphorylated at 'Thr-881'). In terms of processing, phosphorylated during mitosis.

The protein localises to the cytoplasm. Its subcellular location is the cytoskeleton. The protein resides in the spindle. It is found in the microtubule organizing center. It localises to the centrosome. In terms of biological role, contributes to mitotic spindle assembly, maintenance of centrosome integrity and completion of cytokinesis as part of the HAUS augmin-like complex. Promotes the nucleation of microtubules from the spindle through recruitment of NEDD1 and gamma-tubulin. The protein is HAUS augmin-like complex subunit 6 (HAUS6) of Homo sapiens (Human).